Here is a 127-residue protein sequence, read N- to C-terminus: Large ribosomal subunit protein bL19 (127 aa).

This sequence belongs to the bacterial ribosomal protein bL19 family.

Functionally, this protein is located at the 30S-50S ribosomal subunit interface and may play a role in the structure and function of the aminoacyl-tRNA binding site. The chain is Large ribosomal subunit protein bL19 from Roseobacter denitrificans (strain ATCC 33942 / OCh 114) (Erythrobacter sp. (strain OCh 114)).